Consider the following 332-residue polypeptide: Malate dehydrogenase, cytoplasmic (332 aa).

Residues 16-17 (QI), Asp43, and Gly90 contribute to the NAD(+) site. An oxaloacetate-binding site is contributed by Arg99. NAD(+) contacts are provided by Gln113 and Asn132. 4 residues coordinate oxaloacetate: Asn132, Arg163, His188, and Ser243. Catalysis depends on His188, which acts as the Proton acceptor.

It belongs to the LDH/MDH superfamily. MDH type 2 family. In terms of assembly, homodimer.

It localises to the cytoplasm. The catalysed reaction is (S)-malate + NAD(+) = oxaloacetate + NADH + H(+). This is Malate dehydrogenase, cytoplasmic (MDH) from Mesembryanthemum crystallinum (Common ice plant).